Here is a 298-residue protein sequence, read N- to C-terminus: Probable GTP 3',8-cyclase (298 aa).

The 224-residue stretch at 4 to 227 (RYGREIRSFR…MQNRKKYLID (224 aa)) folds into the Radical SAM core domain. Arg13 contacts GTP. The [4Fe-4S] cluster site is built by Cys20 and Cys24. Tyr26 is a binding site for S-adenosyl-L-methionine. Cys27 serves as a coordination point for [4Fe-4S] cluster. GTP is bound at residue Lys61. Gly65 serves as a coordination point for S-adenosyl-L-methionine. Residue Thr91 coordinates GTP. Ser115 is an S-adenosyl-L-methionine binding site. Lys152 is a binding site for GTP. Positions 243 and 246 each coordinate [4Fe-4S] cluster. 248 to 250 (RIR) lines the GTP pocket. Residue Cys260 participates in [4Fe-4S] cluster binding.

It belongs to the radical SAM superfamily. MoaA family. Requires [4Fe-4S] cluster as cofactor.

The catalysed reaction is GTP + AH2 + S-adenosyl-L-methionine = (8S)-3',8-cyclo-7,8-dihydroguanosine 5'-triphosphate + 5'-deoxyadenosine + L-methionine + A + H(+). It participates in cofactor biosynthesis; molybdopterin biosynthesis. In terms of biological role, catalyzes the cyclization of GTP to (8S)-3',8-cyclo-7,8-dihydroguanosine 5'-triphosphate. The sequence is that of Probable GTP 3',8-cyclase from Methanococcus maripaludis (strain C5 / ATCC BAA-1333).